Reading from the N-terminus, the 588-residue chain is DNA mismatch repair protein MutL (588 aa).

The protein belongs to the DNA mismatch repair MutL/HexB family.

Functionally, this protein is involved in the repair of mismatches in DNA. It is required for dam-dependent methyl-directed DNA mismatch repair. May act as a 'molecular matchmaker', a protein that promotes the formation of a stable complex between two or more DNA-binding proteins in an ATP-dependent manner without itself being part of a final effector complex. The protein is DNA mismatch repair protein MutL of Methanocorpusculum labreanum (strain ATCC 43576 / DSM 4855 / Z).